The chain runs to 190 residues: Crossover junction endodeoxyribonuclease RuvC (190 aa).

Residues Asp8, Glu67, and Asp139 contribute to the active site. The Mg(2+) site is built by Asp8, Glu67, and Asp139.

It belongs to the RuvC family. Homodimer which binds Holliday junction (HJ) DNA. The HJ becomes 2-fold symmetrical on binding to RuvC with unstacked arms; it has a different conformation from HJ DNA in complex with RuvA. In the full resolvosome a probable DNA-RuvA(4)-RuvB(12)-RuvC(2) complex forms which resolves the HJ. The cofactor is Mg(2+).

Its subcellular location is the cytoplasm. The catalysed reaction is Endonucleolytic cleavage at a junction such as a reciprocal single-stranded crossover between two homologous DNA duplexes (Holliday junction).. The RuvA-RuvB-RuvC complex processes Holliday junction (HJ) DNA during genetic recombination and DNA repair. Endonuclease that resolves HJ intermediates. Cleaves cruciform DNA by making single-stranded nicks across the HJ at symmetrical positions within the homologous arms, yielding a 5'-phosphate and a 3'-hydroxyl group; requires a central core of homology in the junction. The consensus cleavage sequence is 5'-(A/T)TT(C/G)-3'. Cleavage occurs on the 3'-side of the TT dinucleotide at the point of strand exchange. HJ branch migration catalyzed by RuvA-RuvB allows RuvC to scan DNA until it finds its consensus sequence, where it cleaves and resolves the cruciform DNA. This Haemophilus influenzae (strain 86-028NP) protein is Crossover junction endodeoxyribonuclease RuvC.